We begin with the raw amino-acid sequence, 186 residues long: Ribosome-recycling factor (186 aa).

The protein belongs to the RRF family.

Its subcellular location is the cytoplasm. Functionally, responsible for the release of ribosomes from messenger RNA at the termination of protein biosynthesis. May increase the efficiency of translation by recycling ribosomes from one round of translation to another. In Bartonella henselae (strain ATCC 49882 / DSM 28221 / CCUG 30454 / Houston 1) (Rochalimaea henselae), this protein is Ribosome-recycling factor.